A 655-amino-acid polypeptide reads, in one-letter code: Ribonuclease 3 (655 aa).

2 disordered regions span residues Met-1 to Lys-148 and Leu-171 to Leu-376. Residues Met-1–Ile-400 are unknown. Positions Thr-8 to Lys-20 are enriched in basic residues. 2 stretches are compositionally biased toward basic and acidic residues: residues Asn-21–Thr-34 and Asp-69–Glu-89. Residues Asn-92 to Lys-102 are compositionally biased toward low complexity. Residues Gln-103–Lys-115 are compositionally biased toward basic residues. A compositionally biased stretch (polar residues) spans Ala-135–Lys-148. Low complexity predominate over residues Asn-206 to Lys-223. 2 stretches are compositionally biased toward polar residues: residues Pro-229–Thr-242 and Pro-250–Pro-259. Basic and acidic residues-rich tracts occupy residues Thr-260–Glu-274 and Asp-298–Lys-309. Residues Asn-310–Asn-332 show a composition bias toward low complexity. Over residues Ser-333–Gln-350 the composition is skewed to basic and acidic residues. The segment covering Lys-351–Asn-360 has biased composition (low complexity). Residues Tyr-401–Lys-655 are RNase 3. The RNase III domain occupies Leu-432–Gly-556. Glu-472 is a binding site for Mg(2+). Residue Asp-476 is part of the active site. Asp-542 and Glu-545 together coordinate Mg(2+). Glu-545 is an active-site residue. One can recognise a DRBM domain in the interval Asp-582–Gly-649.

It belongs to the ribonuclease III family. As to quaternary structure, homodimer. Mg(2+) serves as cofactor.

Its subcellular location is the cytoplasm. It catalyses the reaction Endonucleolytic cleavage to 5'-phosphomonoester.. Functionally, digests double-stranded RNA. Involved in the processing of primary rRNA transcript to yield the immediate precursors to the large and small rRNAs (23S and 16S). Processes some mRNAs, and tRNAs when they are encoded in the rRNA operon. Processes pre-crRNA and tracrRNA of type II CRISPR loci if present in the organism. The chain is Ribonuclease 3 (rnc) from Mycoplasmoides gallisepticum (strain R(low / passage 15 / clone 2)) (Mycoplasma gallisepticum).